Consider the following 459-residue polypeptide: Adenylosuccinate synthetase isozyme 1 C (459 aa).

The segment at Met-1–Thr-31 is disordered. Residues Tyr-13–Gln-22 show a composition bias toward polar residues. GTP contacts are provided by residues Gly-44 to Lys-50 and Gly-72 to Thr-74. Asp-45 acts as the Proton acceptor in catalysis. Mg(2+)-binding residues include Asp-45 and Gly-72. Asp-45 is a binding site for substrate. Residues Asp-45–Lys-48, Asn-70–His-73, Thr-165, Arg-179, Asn-258, Thr-273, and Arg-337 contribute to the IMP site. The Proton donor role is filled by His-73. Residue Val-333–Arg-339 participates in substrate binding. Residues Arg-339, Lys-365–Asp-367, and Gly-447–Lys-450 contribute to the GTP site.

The protein belongs to the adenylosuccinate synthetase family. As to quaternary structure, homodimer. Requires Mg(2+) as cofactor.

The protein localises to the cytoplasm. It carries out the reaction IMP + L-aspartate + GTP = N(6)-(1,2-dicarboxyethyl)-AMP + GDP + phosphate + 2 H(+). It functions in the pathway purine metabolism; AMP biosynthesis via de novo pathway; AMP from IMP: step 1/2. Component of the purine nucleotide cycle (PNC), which interconverts IMP and AMP to regulate the nucleotide levels in various tissues, and which contributes to glycolysis and ammoniagenesis. Catalyzes the first committed step in the biosynthesis of AMP from IMP. The sequence is that of Adenylosuccinate synthetase isozyme 1 C (adss1c) from Salmo salar (Atlantic salmon).